We begin with the raw amino-acid sequence, 199 residues long: Large ribosomal subunit protein bL25 (199 aa).

It belongs to the bacterial ribosomal protein bL25 family. CTC subfamily. In terms of assembly, part of the 50S ribosomal subunit; part of the 5S rRNA/L5/L18/L25 subcomplex. Contacts the 5S rRNA. Binds to the 5S rRNA independently of L5 and L18.

In terms of biological role, this is one of the proteins that binds to the 5S RNA in the ribosome where it forms part of the central protuberance. The sequence is that of Large ribosomal subunit protein bL25 from Caldanaerobacter subterraneus subsp. tengcongensis (strain DSM 15242 / JCM 11007 / NBRC 100824 / MB4) (Thermoanaerobacter tengcongensis).